A 129-amino-acid chain; its full sequence is uncharacterized protein (129 aa).

2 helical membrane passes run 35 to 55 and 98 to 118; these read IVDG…WKIP and ILLL…IILL.

The protein resides in the membrane. This is an uncharacterized protein from Saccharomyces cerevisiae (strain ATCC 204508 / S288c) (Baker's yeast).